Reading from the N-terminus, the 611-residue chain is Pseudomonine synthase PmsE (611 aa).

Residues 533–608 (VSVENTRTWL…SWWALVEARQ (76 aa)) form the Carrier domain. O-(pantetheine 4'-phosphoryl)serine is present on Ser-569.

The protein belongs to the ATP-dependent AMP-binding enzyme family. Requires pantetheine 4'-phosphate as cofactor.

The enzyme catalyses salicylate + holo-[ACP] + ATP = salicyl-[ACP] + AMP + diphosphate. It participates in siderophore biosynthesis; pseudomonine biosynthesis. Involved in the biosynthesis of the siderophore pseudomonine. Specifically adenylates salicylate and loads it onto its peptidyl carrier domain, via a thioester linkage to the phosphopanthetheine moiety. This Pseudomonas entomophila (strain L48) protein is Pseudomonine synthase PmsE.